Here is a 69-residue protein sequence, read N- to C-terminus: Bowman-Birk type proteinase inhibitor A2 (69 aa).

Intrachain disulfides connect cysteine 12–cysteine 31, cysteine 18–cysteine 29, cysteine 38–cysteine 45, and cysteine 42–cysteine 59.

It belongs to the Bowman-Birk serine protease inhibitor family. In terms of tissue distribution, expressed in bulb (at protein level).

Its function is as follows. Serine protease inhibitor. The chain is Bowman-Birk type proteinase inhibitor A2 from Hyacinthus orientalis (Common hyacinth).